The following is a 608-amino-acid chain: Albumin (608 aa).

The first 18 residues, 1 to 18 (MKWVTFISLLLLFSSAYS), serve as a signal peptide directing secretion. A propeptide spanning residues 19–24 (RGVTRR) is cleaved from the precursor. 3 consecutive Albumin domains span residues 19-210 (RGVT…DALR), 211-403 (EKVL…EFKP), and 404-601 (LVEE…KLVA). Residue histidine 27 coordinates Cu cation. Serine 29 carries the post-translational modification Phosphoserine. Ca(2+)-binding residues include glutamate 30 and aspartate 37. A disulfide bridge connects residues cysteine 77 and cysteine 86. Phosphoserine is present on residues serine 82 and serine 89. A Zn(2+)-binding site is contributed by histidine 91. 6 disulfide bridges follow: cysteine 99/cysteine 115, cysteine 114/cysteine 125, cysteine 148/cysteine 193, cysteine 192/cysteine 201, cysteine 224/cysteine 270, and cysteine 269/cysteine 277. Lysine 229 is subject to N6-succinyllysine. Glutamate 268 contributes to the Ca(2+) binding site. Positions 271 and 273 each coordinate Zn(2+). The Ca(2+) site is built by aspartate 273, glutamate 276, aspartate 279, and aspartate 283. 8 cysteine pairs are disulfide-bonded: cysteine 289-cysteine 303, cysteine 302-cysteine 313, cysteine 340-cysteine 385, cysteine 384-cysteine 393, cysteine 416-cysteine 462, cysteine 461-cysteine 472, cysteine 485-cysteine 501, and cysteine 500-cysteine 511. Serine 443 carries the post-translational modification Phosphoserine. Residues threonine 444 and threonine 446 each carry the phosphothreonine modification. Residue lysine 460 is modified to N6-succinyllysine. Phosphoserine is present on serine 513. 2 cysteine pairs are disulfide-bonded: cysteine 538-cysteine 583 and cysteine 582-cysteine 591. At lysine 558 the chain carries N6-methyllysine. Phosphothreonine is present on threonine 570. Lysine 588 carries the post-translational modification N6-succinyllysine.

It belongs to the ALB/AFP/VDB family. As to quaternary structure, interacts with FCGRT; this interaction regulates ALB homeostasis. Interacts with TASOR. In plasma, occurs in a covalently-linked complex with chromophore-bound alpha-1-microglobulin; this interaction does not prevent fatty acid binding to ALB. Phosphorylated by FAM20C in the extracellular medium. As to expression, plasma.

The protein resides in the secreted. In terms of biological role, binds water, Ca(2+), Na(+), K(+), fatty acids, hormones, bilirubin and drugs. Its main function is the regulation of the colloidal osmotic pressure of blood. Major zinc transporter in plasma, typically binds about 80% of all plasma zinc. Major calcium and magnesium transporter in plasma, binds approximately 45% of circulating calcium and magnesium in plasma. Potentially has more than two calcium-binding sites and might additionally bind calcium in a non-specific manner. The shared binding site between zinc and calcium at residue Asp-273 suggests a crosstalk between zinc and calcium transport in the blood. The rank order of affinity is zinc &gt; calcium &gt; magnesium. Binds to the bacterial siderophore enterobactin and inhibits enterobactin-mediated iron uptake of E.coli from ferric transferrin, and may thereby limit the utilization of iron and growth of enteric bacteria such as E.coli. Does not prevent iron uptake by the bacterial siderophore aerobactin. The sequence is that of Albumin (ALB) from Felis catus (Cat).